The chain runs to 552 residues: MGCSAKARWAAGALGVAGLLCAVLGAVMIVMVPSLIKQQVLKNVRIDPSSLSFNMWKEIPIPFYLSVYFFDVMNPSEILKGEKPQVRERGPYVYREFRHKSNITFNNNDTVSFLEYRTFQFQPSKSHGSESDYIVMPNILVLGAAVMMENKPMTLKLIMTLAFTTLGERAFMNRTVGEIMWGYKDPLVNLINKYFPGMFPFKDKFGLFAELNNSDSGLFTVFTGVQNISRIHLVDKWNGLSKVDFWHSDQCNMINGTSGQMWPPFMTPESSLEFYSPEACRSMKLMYKESGVFEGIPTYRFVAPKTLFANGSIYPPNEGFCPCLESGIQNVSTCRFSAPLFLSHPHFLNADPVLAEAVTGLHPNQEAHSLFLDIHPVTGIPMNCSVKLQLSLYMKSVAGIGQTGKIEPVVLPLLWFAESGAMEGETLHTFYTQLVLMPKVMHYAQYVLLALGCVLLLVPVICQIRSQVGAGQRAARADSHSLACWGKGASDRTLWPTAAWSPPPAAVLRLCRSGSGHCWGLRSTLASFACRVATTLPVLEGLGPSLGGGTGS.

Residues 1 to 11 (MGCSAKARWAA) are Cytoplasmic-facing. Residues 12 to 32 (GALGVAGLLCAVLGAVMIVMV) form a helical membrane-spanning segment. Residues 33-443 (PSLIKQQVLK…LVLMPKVMHY (411 aa)) lie on the Extracellular side of the membrane. Asn102, Asn108, Asn173, Asn212, Asn227, Asn255, Asn310, Asn330, and Asn383 each carry an N-linked (GlcNAc...) asparagine glycan. Cysteines 251 and 384 form a disulfide. 2 positions are modified to phosphoserine: Tyr393 and Val458. The helical transmembrane segment at 444-464 (AQYVLLALGCVLLLVPVICQI) threads the bilayer. Cys462 carries the S-palmitoyl cysteine lipid modification. The Cytoplasmic portion of the chain corresponds to 465 to 552 (RSQVGAGQRA…GPSLGGGTGS (88 aa)). The residue at position 493 (Thr493) is a Phosphoserine.

Belongs to the CD36 family. In terms of assembly, the C-terminal region binds to PDZK1. (Microbial infection) Interacts with hepatitis C virus E1:E2 glycoproteins. Post-translationally, N-glycosylated. In terms of processing, the six cysteines of the extracellular domain are all involved in intramolecular disulfide bonds. In terms of tissue distribution, widely expressed.

Its subcellular location is the cell membrane. It localises to the membrane. The protein localises to the caveola. Receptor for different ligands such as phospholipids, cholesterol ester, lipoproteins, phosphatidylserine and apoptotic cells. Receptor for HDL, mediating selective uptake of cholesteryl ether and HDL-dependent cholesterol efflux. Also facilitates the flux of free and esterified cholesterol between the cell surface and apoB-containing lipoproteins and modified lipoproteins, although less efficiently than HDL. May be involved in the phagocytosis of apoptotic cells, via its phosphatidylserine binding activity. Functionally, (Microbial infection) Acts as a receptor for hepatitis C virus in hepatocytes and appears to facilitate its cell entry. Binding between SCARB1 and the hepatitis C virus glycoprotein E2 is independent of the genotype of the viral isolate. In terms of biological role, (Microbial infection) Mediates uptake of M.fortuitum, E.coli and S.aureus. Its function is as follows. (Microbial infection) Facilitates the entry of human coronavirus SARS-CoV-2 by acting as an entry cofactor through HDL binding. The sequence is that of Scavenger receptor class B member 1 (SCARB1) from Homo sapiens (Human).